Reading from the N-terminus, the 428-residue chain is Sialidase-3 (428 aa).

An FRIP motif motif is present at residues 24–27 (YRIP). Substrate-binding residues include Arg-25 and Arg-45. Residue Asp-50 is the Proton acceptor of the active site. The BNR 1 repeat unit spans residues 129-140 (ICSQDAGYSWSD). The substrate site is built by Tyr-179 and Tyr-181. The BNR 2 repeat unit spans residues 203-214 (IYSDDLGATWHH). Residues Glu-225 and Arg-245 each contribute to the substrate site. The stretch at 254 to 265 (ALSIDHGECFQK) is one BNR 3 repeat. Residue Ser-314 is modified to Phosphoserine. A substrate-binding site is contributed by Arg-341. The active-site Nucleophile is Tyr-371. Glu-388 is a catalytic residue.

The protein belongs to the glycosyl hydrolase 33 family. As to quaternary structure, interacts with CAV1; this interaction enhances NEU3 sialidase activity within caveola. Interacts with EGFR; this interaction mediates desialylation of EGFR and enhances downstream signaling. Palmitoylated; may regulate intracellular trafficking and anchorage to plasma membrane and endomembranes. Expressed in brain.

It is found in the cell membrane. It localises to the membrane. Its subcellular location is the caveola. The protein localises to the early endosome membrane. The protein resides in the recycling endosome membrane. It is found in the lysosome membrane. The enzyme catalyses Hydrolysis of alpha-(2-&gt;3)-, alpha-(2-&gt;6)-, alpha-(2-&gt;8)- glycosidic linkages of terminal sialic acid residues in oligosaccharides, glycoproteins, glycolipids, colominic acid and synthetic substrates.. The catalysed reaction is a ganglioside GD1a + H2O = a ganglioside GM1 + N-acetylneuraminate. It carries out the reaction a ganglioside GD1a (d18:1(4E)) + H2O = a ganglioside GM1 (d18:1(4E)) + N-acetylneuraminate. It catalyses the reaction a ganglioside GD1b + H2O = a ganglioside GM1 + N-acetylneuraminate. The enzyme catalyses a ganglioside GD1b (d18:1(4E)) + H2O = a ganglioside GM1 (d18:1(4E)) + N-acetylneuraminate. The catalysed reaction is a ganglioside GD3 + H2O = a ganglioside GM3 + N-acetylneuraminate. It carries out the reaction a ganglioside GD3 (d18:1(4E)) + H2O = a ganglioside GM3 (d18:1(4E)) + N-acetylneuraminate. It catalyses the reaction a ganglioside GM3 + H2O = a beta-D-galactosyl-(1-&gt;4)-beta-D-glucosyl-(1&lt;-&gt;1)-ceramide + N-acetylneuraminate. The enzyme catalyses a ganglioside GM1 + H2O = a ganglioside GA1 + N-acetylneuraminate. The catalysed reaction is a ganglioside GM1 (d18:1(4E)) + H2O = a ganglioside GA1 (d18:1(4E)) + N-acetylneuraminate. It carries out the reaction a ganglioside GM2 (d18:1(4E)) + H2O = a ganglioside GA2 (d18:1(4E)) + N-acetylneuraminate. It catalyses the reaction a ganglioside GM3 (d18:1(4E)) + H2O = a beta-D-Gal-(1-&gt;4)-beta-D-Glc-(1&lt;-&gt;1)-Cer(d18:1(4E)) + N-acetylneuraminate. The enzyme catalyses a ganglioside GT1b + H2O = a ganglioside GD1b + N-acetylneuraminate. Its function is as follows. Exo-alpha-sialidase that catalyzes the hydrolytic cleavage of the terminal sialic acid (N-acetylneuraminic acid, Neu5Ac) of a glycan moiety in the catabolism of glycolipids, glycoproteins and oligosacharides. Displays high catalytic efficiency for gangliosides including alpha-(2-&gt;3)-sialylated GD1a and GM3 and alpha-(2-&gt;8)-sialylated GD3. Plays a role in the regulation of transmembrane signaling through the modulation of ganglioside content of the lipid bilayer and by direct interaction with signaling receptors, such as EGFR. Desialylates EGFR and activates downstream signaling in proliferating cells. Contributes to clathrin-mediated endocytosis by regulating sorting of endocytosed receptors to early and recycling endosomes. In Bos taurus (Bovine), this protein is Sialidase-3 (NEU3).